A 299-amino-acid chain; its full sequence is MAEEQARHVKNGLECIRALKAEPIGSLAIGEAMAAWSEISDNPGQEQATCKEEEAGASGLSKPCLSAIGSTEGGAPRIRGQGSGESDDDTETLGFPSRNLQASSTGLQCYYVYDHSGEAVKGIQDADSIMVQSGLDGDSTLSGGDNESENSDVDIGEPDTEGYAITDRGPAPISMGFRASDVETAEGGEIHELLRLQSRGNNFPKLGKTLNVPPPPDPGRASTSETPIKKGHRREISLIWDGDRVFIDRWCNPMCSKVTLGTIRARCTCGECPRVCEQCRTDTGVDTRIWYHNLPEIPE.

The tract at residues 40-98 is disordered; the sequence is SDNPGQEQATCKEEEAGASGLSKPCLSAIGSTEGGAPRIRGQGSGESDDDTETLGFPSR. The interval 110–120 is interaction with host STAT1; it reads YYVYDHSGEAV. The segment covering 134–145 has biased composition (low complexity); the sequence is GLDGDSTLSGGD. Disordered regions lie at residues 134–174 and 204–230; these read GLDG…APIS and PKLGKTLNVPPPPDPGRASTSETPIKK. Over residues 146–160 the composition is skewed to acidic residues; the sequence is NESENSDVDIGEPDT. Residues His232, Cys251, Cys255, Cys267, Cys269, Cys272, Cys276, and Cys279 each contribute to the Zn(2+) site.

It belongs to the paramyxoviruses V protein family. Interacts with host IFIH1/MDA5 and DHX58/LGP2; these interactions are involved in the inhibition of the host type I interferon signaling pathway. Interacts with host TYK2; this interaction inhibits the type I interferon signaling pathway without affecting the type II pathway. Interacts with host IRF7; this interaction inhibits IRF7 translocation to the nucleus. Interacts with host CHUK. Interacts with host RELA/p65; this interaction inhibits the nuclear translocation of NF-KappaB. Interacts (via N-terminus) with host STAT1 and JAK1; these interactions inhibit STAT1 phosphorylation by Jak1 and thereby the type I interferon signaling pathway. Interacts (via C-terminus) with host STAT2; this interaction is involved in the inhibition of the host type I interferon signaling pathway. Forms a complex with host PPP1CA and PPP1CC; this interaction prevents dephosphorylation of host IFIH1/MDA5 and leads to the inhibition of the host type I interferon signaling pathway. Interacts with host IRF9; this interaction prevents the binding of IRF9 to STAT2 and thereby the type I interferon signaling pathway. Interacts with host RIGI regulatory protein (via CARDs domain) and host TRIM25 (via SPRY domain); these interactions prevent TRIM25-mediated ubiquitination of RIG-I and disrupts downstream RIG-I signaling.

The protein resides in the host cytoplasm. Plays an essential role in the inhibition of host immune response. Prevents the establishment of cellular antiviral state by blocking interferon-alpha/beta (IFN-alpha/beta) production and signaling pathway. Interacts with host IFIH1/MDA5 and DHX58/LGP2 to inhibit the transduction pathway involved in the activation of IFN-beta promoter, thus protecting the virus against cell antiviral state. Blocks the type I interferon signaling pathway by interacting with host TYK2 and thereby inhibiting downstream STAT1 and STAT2 phosphorylation. Blocks the type I interferon signaling pathway by disrupting the RIG-I signaling pathway. Moderately affects the type II interferon signaling. Prevents PP1alpha/gamma-mediated dephosphorylation of host IFIH1/MDA5 and thus blocks its activation. The protein is Non-structural protein V (P/V) of Measles virus (strain IP-3-Ca) (MeV).